A 435-amino-acid chain; its full sequence is Eukaryotic peptide chain release factor subunit 1-3 (435 aa).

Residue Ala-2 is modified to N-acetylalanine.

It belongs to the eukaryotic release factor 1 family. Heterodimer of two subunits, one of which binds GTP.

It localises to the cytoplasm. Directs the termination of nascent peptide synthesis (translation) in response to the termination codons UAA, UAG and UGA. Modulates plant growth and development. The sequence is that of Eukaryotic peptide chain release factor subunit 1-3 from Brassica oleracea var. botrytis (Cauliflower).